The primary structure comprises 202 residues: Glycerol-3-phosphate acyltransferase (202 aa).

6 helical membrane-spanning segments follow: residues 2-22 (MIIVMLLLSYLIGAFPSGFVI), 54-74 (FLVTFLDIFKGFITVFFPLWL), 85-105 (FFTNGLIVGLFAILGHVYPVY), 120-140 (VVLGVNPILLLILAIIFFIIL), 141-161 (KIFKYVSLASIVAAICCVIGS), and 162-182 (LIIQDYILLVVSFLVSIILII).

This sequence belongs to the PlsY family. As to quaternary structure, probably interacts with PlsX.

The protein resides in the cell membrane. The enzyme catalyses an acyl phosphate + sn-glycerol 3-phosphate = a 1-acyl-sn-glycero-3-phosphate + phosphate. The protein operates within lipid metabolism; phospholipid metabolism. Functionally, catalyzes the transfer of an acyl group from acyl-phosphate (acyl-PO(4)) to glycerol-3-phosphate (G3P) to form lysophosphatidic acid (LPA). This enzyme utilizes acyl-phosphate as fatty acyl donor, but not acyl-CoA or acyl-ACP. The protein is Glycerol-3-phosphate acyltransferase of Staphylococcus aureus (strain bovine RF122 / ET3-1).